We begin with the raw amino-acid sequence, 352 residues long: Probable dual-specificity RNA methyltransferase RlmN (352 aa).

E92 functions as the Proton acceptor in the catalytic mechanism. Positions 98–328 constitute a Radical SAM core domain; sequence YKHGFTACIS…ATIRREMGTD (231 aa). An intrachain disulfide couples C105 to C333. [4Fe-4S] cluster is bound by residues C112, C116, and C119. Residues 159–160, S191, 214–216, and N290 contribute to the S-adenosyl-L-methionine site; these read GE and SLH. C333 functions as the S-methylcysteine intermediate in the catalytic mechanism.

It belongs to the radical SAM superfamily. RlmN family. [4Fe-4S] cluster is required as a cofactor.

It localises to the cytoplasm. The enzyme catalyses adenosine(2503) in 23S rRNA + 2 reduced [2Fe-2S]-[ferredoxin] + 2 S-adenosyl-L-methionine = 2-methyladenosine(2503) in 23S rRNA + 5'-deoxyadenosine + L-methionine + 2 oxidized [2Fe-2S]-[ferredoxin] + S-adenosyl-L-homocysteine. It catalyses the reaction adenosine(37) in tRNA + 2 reduced [2Fe-2S]-[ferredoxin] + 2 S-adenosyl-L-methionine = 2-methyladenosine(37) in tRNA + 5'-deoxyadenosine + L-methionine + 2 oxidized [2Fe-2S]-[ferredoxin] + S-adenosyl-L-homocysteine. Specifically methylates position 2 of adenine 2503 in 23S rRNA and position 2 of adenine 37 in tRNAs. This is Probable dual-specificity RNA methyltransferase RlmN from Alkaliphilus metalliredigens (strain QYMF).